Reading from the N-terminus, the 677-residue chain is Pannexin-2 (677 aa).

The Cytoplasmic portion of the chain corresponds to 11 to 53 (MATALLAGEKLRELILPGSQDDKAGALAALLLQLKLELPFDRV). Residues 54 to 74 (VTIGTVLVPILLVTLVFTKNF) form a helical membrane-spanning segment. The Extracellular segment spans residues 75–125 (AEEPIYCYTPHNFTRDQALYARGYCWTELRDALPGVDASLWPSLFEHKFLP). N-linked (GlcNAc...) asparagine glycosylation occurs at asparagine 86. The chain crosses the membrane as a helical span at residues 126–146 (YALLAFAAIMYVPALGWEFLA). Over 147-230 (STRLTSELNF…NFLAKLYLAR (84 aa)) the chain is Cytoplasmic. The chain crosses the membrane as a helical span at residues 231 to 251 (HVLILLLSVVPISYLCTYYAT). The Extracellular portion of the chain corresponds to 252-295 (QKQNEFTCALGASPDGPVGSAGPTVRVSCKLPSVQLQRIIAGVD). A helical membrane pass occupies residues 296 to 316 (IVLLCFMNLIILVNLIHLFIF). The Cytoplasmic portion of the chain corresponds to 317–617 (RKSNFIFDKL…LGKADPLTIL (301 aa)). Polar residues predominate over residues 394-408 (TTPTVRDSGIQTVDP). Disordered regions lie at residues 394–425 (TTPT…PVVK) and 485–512 (AHHY…HTRH). 2 positions are modified to phosphoserine: serine 593 and serine 604.

Belongs to the pannexin family. Homoheptameric. Post-translationally, S-palmitoylated in neural stem and progenitor cells. In terms of processing, cleaved by CASP3 and CASP7 during apoptosis. Cleavage has no effect on it function. In terms of tissue distribution, expression is enriched in central nervous system. Expressed in suprabasal layers of skin epidermis. As to expression, more aboundantly expressed in skin.

The protein localises to the cell membrane. Its subcellular location is the golgi apparatus membrane. The protein resides in the endoplasmic reticulum membrane. The enzyme catalyses ATP(in) = ATP(out). The catalysed reaction is chloride(in) = chloride(out). It catalyses the reaction iodide(out) = iodide(in). It carries out the reaction Na(+)(in) = Na(+)(out). The enzyme catalyses D-gluconate(in) = D-gluconate(out). Its function is as follows. Ion channel with a slight anion preference. Also able to release ATP. Plays a role in regulating neurogenesis and apoptosis in keratinocytes. This is Pannexin-2 (Panx2) from Mus musculus (Mouse).